Here is a 436-residue protein sequence, read N- to C-terminus: 3-ketoacyl-CoA thiolase (436 aa).

Residue C99 is the Acyl-thioester intermediate of the active site. Active-site proton acceptor residues include H392 and C422.

Belongs to the thiolase-like superfamily. Thiolase family. As to quaternary structure, heterotetramer of two alpha chains (FadJ) and two beta chains (FadI).

It is found in the cytoplasm. The catalysed reaction is an acyl-CoA + acetyl-CoA = a 3-oxoacyl-CoA + CoA. Its pathway is lipid metabolism; fatty acid beta-oxidation. Catalyzes the final step of fatty acid oxidation in which acetyl-CoA is released and the CoA ester of a fatty acid two carbons shorter is formed. This Escherichia coli O127:H6 (strain E2348/69 / EPEC) protein is 3-ketoacyl-CoA thiolase.